Consider the following 341-residue polypeptide: Cytochrome c biogenesis protein CcsA (341 aa).

The next 8 membrane-spanning stretches (helical) occupy residues 16–36 (LILLLTMLIYWAGAAFPGMSI), 37–57 (LPTLGTAGVAIANLSIATLLG), 68–88 (LSNLYESLFFLAWGVTAVHLI), 97–117 (LVGVVTTPVAMGITAFAALSL), 142–162 (VMMLSYATLMVGAVLAIAFLI), 249–269 (IIGLGFPLLTIGIIAGAVWAN), 276–296 (WSWDPKETWALITWLVFAAYL), and 310–330 (AILAASGFIVVWVCYLGVNLL).

Belongs to the CcmF/CycK/Ccl1/NrfE/CcsA family. In terms of assembly, may interact with ccs1.

Its subcellular location is the cellular thylakoid membrane. In terms of biological role, required during biogenesis of c-type cytochromes (cytochrome c6 and cytochrome f) at the step of heme attachment. In Rippkaea orientalis (strain PCC 8801 / RF-1) (Cyanothece sp. (strain PCC 8801)), this protein is Cytochrome c biogenesis protein CcsA.